A 252-amino-acid polypeptide reads, in one-letter code: Imidazole glycerol phosphate synthase subunit HisF (252 aa).

Active-site residues include D11 and D130.

This sequence belongs to the HisA/HisF family. In terms of assembly, heterodimer of HisH and HisF.

The protein resides in the cytoplasm. The enzyme catalyses 5-[(5-phospho-1-deoxy-D-ribulos-1-ylimino)methylamino]-1-(5-phospho-beta-D-ribosyl)imidazole-4-carboxamide + L-glutamine = D-erythro-1-(imidazol-4-yl)glycerol 3-phosphate + 5-amino-1-(5-phospho-beta-D-ribosyl)imidazole-4-carboxamide + L-glutamate + H(+). The protein operates within amino-acid biosynthesis; L-histidine biosynthesis; L-histidine from 5-phospho-alpha-D-ribose 1-diphosphate: step 5/9. Its function is as follows. IGPS catalyzes the conversion of PRFAR and glutamine to IGP, AICAR and glutamate. The HisF subunit catalyzes the cyclization activity that produces IGP and AICAR from PRFAR using the ammonia provided by the HisH subunit. This Lactiplantibacillus plantarum (strain ATCC BAA-793 / NCIMB 8826 / WCFS1) (Lactobacillus plantarum) protein is Imidazole glycerol phosphate synthase subunit HisF.